A 353-amino-acid polypeptide reads, in one-letter code: Photosystem II D2 protein (353 aa).

T2 is modified (N-acetylthreonine). Residue T2 is modified to Phosphothreonine. Residues 41–61 (CAYFALGGWFTGTTFVTSWYT) traverse the membrane as a helical segment. Residue H118 participates in chlorophyll a binding. A helical transmembrane segment spans residues 125-141 (GFMLRQFELARSVQLRP). The pheophytin a site is built by Q130 and N143. A helical membrane pass occupies residues 153-166 (VFVSVFLIYPLGQS). H198 lines the chlorophyll a pocket. Residues 208–228 (AALLCAIHGATVENTLFEDGD) traverse the membrane as a helical segment. A plastoquinone contacts are provided by H215 and F262. Residue H215 participates in Fe cation binding. Residue H269 coordinates Fe cation. A helical membrane pass occupies residues 279-295 (GLWMSALGVVGLALNLR).

Belongs to the reaction center PufL/M/PsbA/D family. In terms of assembly, PSII is composed of 1 copy each of membrane proteins PsbA, PsbB, PsbC, PsbD, PsbE, PsbF, PsbH, PsbI, PsbJ, PsbK, PsbL, PsbM, PsbT, PsbX, PsbY, PsbZ, Psb30/Ycf12, at least 3 peripheral proteins of the oxygen-evolving complex and a large number of cofactors. It forms dimeric complexes. Requires The D1/D2 heterodimer binds P680, chlorophylls that are the primary electron donor of PSII, and subsequent electron acceptors. It shares a non-heme iron and each subunit binds pheophytin, quinone, additional chlorophylls, carotenoids and lipids. There is also a Cl(-1) ion associated with D1 and D2, which is required for oxygen evolution. The PSII complex binds additional chlorophylls, carotenoids and specific lipids. as cofactor.

Its subcellular location is the plastid. The protein localises to the chloroplast thylakoid membrane. The catalysed reaction is 2 a plastoquinone + 4 hnu + 2 H2O = 2 a plastoquinol + O2. Its function is as follows. Photosystem II (PSII) is a light-driven water:plastoquinone oxidoreductase that uses light energy to abstract electrons from H(2)O, generating O(2) and a proton gradient subsequently used for ATP formation. It consists of a core antenna complex that captures photons, and an electron transfer chain that converts photonic excitation into a charge separation. The D1/D2 (PsbA/PsbD) reaction center heterodimer binds P680, the primary electron donor of PSII as well as several subsequent electron acceptors. D2 is needed for assembly of a stable PSII complex. The protein is Photosystem II D2 protein of Nuphar advena (Common spatterdock).